A 400-amino-acid chain; its full sequence is tRNA-specific 2-thiouridylase MnmA (400 aa).

ATP is bound by residues 19–26 (AMSGGVDS) and L45. C113 functions as the Nucleophile in the catalytic mechanism. Cysteines 113 and 210 form a disulfide. G137 contributes to the ATP binding site. An interaction with tRNA region spans residues 160–162 (RDQ). C210 acts as the Cysteine persulfide intermediate in catalysis.

Belongs to the MnmA/TRMU family.

It localises to the cytoplasm. The catalysed reaction is S-sulfanyl-L-cysteinyl-[protein] + uridine(34) in tRNA + AH2 + ATP = 2-thiouridine(34) in tRNA + L-cysteinyl-[protein] + A + AMP + diphosphate + H(+). Functionally, catalyzes the 2-thiolation of uridine at the wobble position (U34) of tRNA, leading to the formation of s(2)U34. The polypeptide is tRNA-specific 2-thiouridylase MnmA (Rhodopseudomonas palustris (strain BisA53)).